Consider the following 236-residue polypeptide: Pyridoxine 5'-phosphate synthase (236 aa).

N6 lines the 3-amino-2-oxopropyl phosphate pocket. 8 to 9 contributes to the 1-deoxy-D-xylulose 5-phosphate binding site; it reads DH. R17 contributes to the 3-amino-2-oxopropyl phosphate binding site. Residue H42 is the Proton acceptor of the active site. 1-deoxy-D-xylulose 5-phosphate contacts are provided by R44 and H49. Catalysis depends on E69, which acts as the Proton acceptor. Residue T99 participates in 1-deoxy-D-xylulose 5-phosphate binding. H190 acts as the Proton donor in catalysis. Residues G191 and 212-213 each bind 3-amino-2-oxopropyl phosphate; that span reads GH.

This sequence belongs to the PNP synthase family. Homooctamer; tetramer of dimers.

The protein resides in the cytoplasm. It carries out the reaction 3-amino-2-oxopropyl phosphate + 1-deoxy-D-xylulose 5-phosphate = pyridoxine 5'-phosphate + phosphate + 2 H2O + H(+). It functions in the pathway cofactor biosynthesis; pyridoxine 5'-phosphate biosynthesis; pyridoxine 5'-phosphate from D-erythrose 4-phosphate: step 5/5. Functionally, catalyzes the complicated ring closure reaction between the two acyclic compounds 1-deoxy-D-xylulose-5-phosphate (DXP) and 3-amino-2-oxopropyl phosphate (1-amino-acetone-3-phosphate or AAP) to form pyridoxine 5'-phosphate (PNP) and inorganic phosphate. This Prosthecochloris aestuarii (strain DSM 271 / SK 413) protein is Pyridoxine 5'-phosphate synthase.